The primary structure comprises 153 residues: Putative ATP synthase subunit f, mitochondrial (153 aa).

The protein belongs to the ATPase F chain family. In terms of assembly, subunit of the F-type ATPase which has 2 components, CF(1) - the catalytic core - and CF(0) - the membrane proton channel.

Its subcellular location is the mitochondrion membrane. In terms of biological role, mitochondrial membrane ATP synthase (F(1)F(0) ATP synthase or Complex V) produces ATP from ADP in the presence of a proton gradient across the membrane which is generated by electron transport complexes of the respiratory chain. F-type ATPases consist of two structural domains, F(1) - containing the extramembraneous catalytic core and F(0) - containing the membrane proton channel, linked together by a central stalk and a peripheral stalk. During catalysis, ATP synthesis in the catalytic domain of F(1) is coupled via a rotary mechanism of the central stalk subunits to proton translocation. Part of the complex F(0) domain. Minor subunit located with subunit a in the membrane. This is Putative ATP synthase subunit f, mitochondrial from Caenorhabditis elegans.